The chain runs to 75 residues: Meucin-49 (75 aa).

An N-terminal signal peptide occupies residues 1–22 (MNKKILLVIFIVTMLIVDEVNS).

It belongs to the non-disulfide-bridged peptide (NDBP) superfamily. Long chain multifunctional peptide (group 2) family. As to expression, expressed by the venom gland.

The protein resides in the secreted. In terms of biological role, insecticidal toxin and antimicrobial peptide with potent activity against both Gram-negative and -positive bacteria, as well as against fungi. Acts by disrupting bacterial membrane integrity. Shows broad-spectrum and highly potent bactericidal activities against the Gram-positive bacteria B.cereus, B.megaterium, B.subtilis, M.luteus, S.aureus, S.epidermidis, S.warneri, S.griseus, S.scabiei, S.mutans, S.salivarius, and S.sanguinis. Also exhibits a wide spectrum of activity against the Gram-negative bacteria A.faecalis, E.coli, P.aeruginosa, P.solanacearum, S.enterica, S.marcescens, and S.maltophilia. Also shows antimicrobial activities against the fungal strains Aspergillus flavus, A.fumigatus, A.nidulans, A.niger, Beauveria bassiana, and Saccharomyces cerevisiae. Its antibiotic activity is potentiated by other antibacterial peptides such as MeuNaTxbeta-4. Also induces cytolysis on mice, lizards and birds erythrocytes. In Mesobuthus eupeus (Lesser Asian scorpion), this protein is Meucin-49.